The sequence spans 689 residues: Glycine--tRNA ligase beta subunit (689 aa).

Belongs to the class-II aminoacyl-tRNA synthetase family. As to quaternary structure, tetramer of two alpha and two beta subunits.

The protein localises to the cytoplasm. It catalyses the reaction tRNA(Gly) + glycine + ATP = glycyl-tRNA(Gly) + AMP + diphosphate. The chain is Glycine--tRNA ligase beta subunit from Shewanella sediminis (strain HAW-EB3).